The chain runs to 330 residues: Putative glycosyltransferase ORF330 (330 aa).

This sequence belongs to the glycosyltransferase group 1 family. Glycosyltransferase 4 subfamily.

The protein is Putative glycosyltransferase ORF330 of Acidianus filamentous virus 2 (isolate Italy/Pozzuoli) (AFV-2).